We begin with the raw amino-acid sequence, 689 residues long: Beta-galactosidase Pbg (689 aa).

R118 is a binding site for substrate. Zn(2+) is bound at residue C122. A substrate-binding site is contributed by N156. E157 (proton donor) is an active-site residue. Residues C162, C164, and C167 each coordinate Zn(2+). The active-site Nucleophile is E318. Substrate contacts are provided by residues W326 and 366-369 (EKFH).

The protein belongs to the glycosyl hydrolase 42 family.

It carries out the reaction Hydrolysis of terminal non-reducing beta-D-galactose residues in beta-D-galactosides.. The polypeptide is Beta-galactosidase Pbg (Clostridium perfringens (strain ATCC 13124 / DSM 756 / JCM 1290 / NCIMB 6125 / NCTC 8237 / Type A)).